We begin with the raw amino-acid sequence, 740 residues long: MSLLLEPSPTMIKEQKMYRDMGLTDEEFAMIERILGRLPNYTETGIFSVMWSEHCSYKNSKPVLKKFPTEGKHVLQGPGEGAGIVDIGDGLAVAFKIESHNHPSAIEPYQGAATGVGGIIRDVFSMGARPIALLNSLRFGELTSPRVKYLFERVVAGIAGYGNCVGIPTVGGEVQFDAAYEGNPLVNAMCVGVIRHEDIQKGIASGVGNTVMYVGAKTGRDGIHGATFASEELTEQSEQKRPAVQVGDPFMEKLLLEACLEVIHCDALVGMQDMGAAGLTSSSAEMASKAGSGIELNLDLVPQRETGMTPYEMMLSESQERMLLVVKKGREQEIMDVFSKYGLEAKAIGRVTDDHMLRLYHRGEVVAEIPVDALAKDAPVYHKPSQEPAYYREFQTMEYVPTVDNYEETLLALLSQPTIASKEWVYEQYDYMVRTNTVVAPGSDAAVLRIRGTNKALAMTTDCNSRYVYLDPEVGGKIAIAEAARNIVCSGAQPLAVTDCLNFGNPEKPEIFWQLEKAVDGMSEACRILETPVISGNVSLYNETNGEAIYPTPIVGMVGIVEHVDHITTQAFKQPGDLIYIIGEAKQEFGGSELQKWLTGRIFGKAPTIDLHVEVKRQQQLLTAIRAGVVASAHDVSEGGLAVALAECVMSAQGLGARVEMKGDVVAELFSETQSRFIVSVKKEHQQMFERLVQAVRIGEVTNDGTLHVTAEDTCILHVPVETMRNVWKGAIPCLLKSKD.

Residue His-54 is part of the active site. 2 residues coordinate ATP: Tyr-57 and Lys-96. A Mg(2+)-binding site is contributed by Glu-98. Residues 99–102 and Arg-121 each bind substrate; that span reads SHNH. The active-site Proton acceptor is His-100. Asp-122 is a binding site for Mg(2+). Gln-245 lines the substrate pocket. Asp-273 contributes to the Mg(2+) binding site. 317 to 319 is a binding site for substrate; sequence ESQ. 2 residues coordinate ATP: Asp-499 and Gly-536. Asn-537 lines the Mg(2+) pocket. Ser-539 lines the substrate pocket.

The protein belongs to the FGAMS family. As to quaternary structure, monomer. Part of the FGAM synthase complex composed of 1 PurL, 1 PurQ and 2 PurS subunits.

The protein localises to the cytoplasm. It carries out the reaction N(2)-formyl-N(1)-(5-phospho-beta-D-ribosyl)glycinamide + L-glutamine + ATP + H2O = 2-formamido-N(1)-(5-O-phospho-beta-D-ribosyl)acetamidine + L-glutamate + ADP + phosphate + H(+). It functions in the pathway purine metabolism; IMP biosynthesis via de novo pathway; 5-amino-1-(5-phospho-D-ribosyl)imidazole from N(2)-formyl-N(1)-(5-phospho-D-ribosyl)glycinamide: step 1/2. Functionally, part of the phosphoribosylformylglycinamidine synthase complex involved in the purines biosynthetic pathway. Catalyzes the ATP-dependent conversion of formylglycinamide ribonucleotide (FGAR) and glutamine to yield formylglycinamidine ribonucleotide (FGAM) and glutamate. The FGAM synthase complex is composed of three subunits. PurQ produces an ammonia molecule by converting glutamine to glutamate. PurL transfers the ammonia molecule to FGAR to form FGAM in an ATP-dependent manner. PurS interacts with PurQ and PurL and is thought to assist in the transfer of the ammonia molecule from PurQ to PurL. This chain is Phosphoribosylformylglycinamidine synthase subunit PurL, found in Anoxybacillus flavithermus (strain DSM 21510 / WK1).